Consider the following 75-residue polypeptide: Small ribosomal subunit protein bS18 (75 aa).

The protein belongs to the bacterial ribosomal protein bS18 family. As to quaternary structure, part of the 30S ribosomal subunit. Forms a tight heterodimer with protein bS6.

In terms of biological role, binds as a heterodimer with protein bS6 to the central domain of the 16S rRNA, where it helps stabilize the platform of the 30S subunit. The sequence is that of Small ribosomal subunit protein bS18 from Yersinia enterocolitica serotype O:8 / biotype 1B (strain NCTC 13174 / 8081).